The primary structure comprises 512 residues: Maturase K (512 aa).

It belongs to the intron maturase 2 family. MatK subfamily.

It is found in the plastid. The protein localises to the chloroplast. Its function is as follows. Usually encoded in the trnK tRNA gene intron. Probably assists in splicing its own and other chloroplast group II introns. This is Maturase K from Lilium regale (Regal lily).